The following is a 403-amino-acid chain: Tryptophan synthase beta chain (403 aa).

At lysine 88 the chain carries N6-(pyridoxal phosphate)lysine.

The protein belongs to the TrpB family. Tetramer of two alpha and two beta chains. Requires pyridoxal 5'-phosphate as cofactor.

It catalyses the reaction (1S,2R)-1-C-(indol-3-yl)glycerol 3-phosphate + L-serine = D-glyceraldehyde 3-phosphate + L-tryptophan + H2O. It participates in amino-acid biosynthesis; L-tryptophan biosynthesis; L-tryptophan from chorismate: step 5/5. Functionally, the beta subunit is responsible for the synthesis of L-tryptophan from indole and L-serine. The sequence is that of Tryptophan synthase beta chain from Shewanella frigidimarina (strain NCIMB 400).